Consider the following 127-residue polypeptide: S1-like domain-containing protein C146.08c (127 aa).

The S1-like domain occupies 10 to 86; that stretch reads SFDPPARLEK…NKIDGTILYV (77 aa). A disordered region spans residues 107 to 127; the sequence is ESLNQNDSEESSSSEEEYDSD. The segment covering 113–127 has biased composition (acidic residues); that stretch reads DSEESSSSEEEYDSD. A Phosphotyrosine modification is found at Y124. Residue S126 is modified to Phosphoserine.

This sequence belongs to the EIF1AD family.

It is found in the cytoplasm. The protein localises to the nucleus. The sequence is that of S1-like domain-containing protein C146.08c from Schizosaccharomyces pombe (strain 972 / ATCC 24843) (Fission yeast).